The following is a 184-amino-acid chain: Rhox homeobox family member 1 (184 aa).

Positions 26 to 104 (QLGAASSAEG…GPQPENMQPR (79 aa)) are disordered. The segment covering 88–99 (PAQAAMEGPQPE) has biased composition (low complexity). The homeobox DNA-binding region spans 103 to 162 (PRTRRTKFTLLQVEELESVFRHTQYPDVPTRRELAENLGVTEDKVRVWFKNKRARCRRHQ). A Nuclear localization signal motif is present at residues 155-164 (RARCRRHQRE).

This sequence belongs to the paired-like homeobox family. PEPP subfamily. As to quaternary structure, does not interact with itself. Ovary, testis and epididymis. Also detected in the prostate and the mammary gland. Expressed in many tumor cell lines derived from acute lymphocytic leukemia, prostate, endometrial adenocarcinoma, melanoma, bladder carcinoma, colon carcinoma, erythroleukemia and breast carcinoma. Not expressed in placenta. In testis, mainly expressed in germ cells, but also detected in somatic cells such as Sertoli cells, Leydig cells and peritubular cells.

It is found in the nucleus. Its function is as follows. Transcription factor maybe involved in reproductive processes. Modulates expression of target genes encoding proteins involved in processes relevant to spermatogenesis. This Homo sapiens (Human) protein is Rhox homeobox family member 1.